The primary structure comprises 1171 residues: ATP-dependent helicase/deoxyribonuclease subunit B (1171 aa).

Residues 1–390 form the UvrD-like helicase ATP-binding domain; the sequence is MSLRFVIGRA…HPLVECIRSA (390 aa). ATP is bound at residue 8-15; the sequence is GRAGSGKS. The 307-residue stretch at 281–587 folds into the UvrD-like helicase C-terminal domain; sequence MEQPRFHSPA…QFANIPPSLD (307 aa). Residues cysteine 805, cysteine 1129, cysteine 1132, and cysteine 1138 each coordinate [4Fe-4S] cluster.

This sequence belongs to the helicase family. AddB/RexB type 1 subfamily. In terms of assembly, heterodimer of AddA and AddB. Mg(2+) serves as cofactor. [4Fe-4S] cluster is required as a cofactor.

The heterodimer acts as both an ATP-dependent DNA helicase and an ATP-dependent, dual-direction single-stranded exonuclease. Recognizes the chi site generating a DNA molecule suitable for the initiation of homologous recombination. The AddB subunit has 5' -&gt; 3' nuclease activity but not helicase activity. The sequence is that of ATP-dependent helicase/deoxyribonuclease subunit B from Bacillus cereus (strain ATCC 10987 / NRS 248).